The primary structure comprises 67 residues: Large ribosomal subunit protein bL35 (67 aa).

Belongs to the bacterial ribosomal protein bL35 family.

The protein is Large ribosomal subunit protein bL35 of Rhizobium etli (strain ATCC 51251 / DSM 11541 / JCM 21823 / NBRC 15573 / CFN 42).